The primary structure comprises 237 residues: Large ribosomal subunit protein uL2 (237 aa).

Residues 202 to 237 (FGGGNRKHPGKPTTVSRNAPPGRKVGHIAARRTGKR) are disordered. Over residues 225–237 (KVGHIAARRTGKR) the composition is skewed to basic residues.

It belongs to the universal ribosomal protein uL2 family. In terms of assembly, part of the 50S ribosomal subunit. Forms a bridge to the 30S subunit in the 70S ribosome.

Its function is as follows. One of the primary rRNA binding proteins. Required for association of the 30S and 50S subunits to form the 70S ribosome, for tRNA binding and peptide bond formation. It has been suggested to have peptidyltransferase activity; this is somewhat controversial. Makes several contacts with the 16S rRNA in the 70S ribosome. The sequence is that of Large ribosomal subunit protein uL2 from Methanococcoides burtonii (strain DSM 6242 / NBRC 107633 / OCM 468 / ACE-M).